Here is a 27-residue protein sequence, read N- to C-terminus: M-lycotoxin-Hc2a (27 aa).

In terms of tissue distribution, expressed by the venom gland.

The protein localises to the secreted. Functionally, forms pore that permeabilize the cell membrane. Promotes efflux of calcium from synaptosomes, causes hemolysis, and dissipates voltage gradients across muscle membrane. Potently inhibits the growth of bacteria, yeast and Leishmania. May function both in the prey capture strategy as well as protection from infectious organisms arising from prey ingestion. The protein is M-lycotoxin-Hc2a of Hogna carolinensis (Carolina wolf spider).